Reading from the N-terminus, the 56-residue chain is Large ribosomal subunit protein bL32 (56 aa).

Positions 1–16 (MAVQKSKKSRSMRGMR) are enriched in basic residues. The interval 1–22 (MAVQKSKKSRSMRGMRRSHDAL) is disordered.

It belongs to the bacterial ribosomal protein bL32 family.

In Aliivibrio salmonicida (strain LFI1238) (Vibrio salmonicida (strain LFI1238)), this protein is Large ribosomal subunit protein bL32.